The primary structure comprises 283 residues: Phosphatidylglycerol--prolipoprotein diacylglyceryl transferase (283 aa).

4 consecutive transmembrane segments (helical) span residues 20–40 (LGPVPIRAYALCIIVGIFVAM), 51–71 (GGNPDLVIDAGIVAVIAGIIG), 97–117 (ITNGGLGIWGAVALGTIAVYF), and 123–143 (GVAFALFADAVAPGIILAQAI). Position 145 (arginine 145) interacts with a 1,2-diacyl-sn-glycero-3-phospho-(1'-sn-glycerol). 2 helical membrane-spanning segments follow: residues 192 to 212 (VHPTFLYEMIWNLVIFAVLLW) and 255 to 275 (INVIVSVVVCAIAVGALFALR).

Belongs to the Lgt family.

Its subcellular location is the cell membrane. It carries out the reaction L-cysteinyl-[prolipoprotein] + a 1,2-diacyl-sn-glycero-3-phospho-(1'-sn-glycerol) = an S-1,2-diacyl-sn-glyceryl-L-cysteinyl-[prolipoprotein] + sn-glycerol 1-phosphate + H(+). It functions in the pathway protein modification; lipoprotein biosynthesis (diacylglyceryl transfer). Catalyzes the transfer of the diacylglyceryl group from phosphatidylglycerol to the sulfhydryl group of the N-terminal cysteine of a prolipoprotein, the first step in the formation of mature lipoproteins. This is Phosphatidylglycerol--prolipoprotein diacylglyceryl transferase from Corynebacterium diphtheriae (strain ATCC 700971 / NCTC 13129 / Biotype gravis).